The primary structure comprises 1216 residues: 1-phosphatidylinositol 4,5-bisphosphate phosphodiesterase beta-1 (1216 aa).

C17 carries the S-palmitoyl cysteine lipid modification. A Phosphoserine modification is found at S236. Residues 316 to 467 (EDMSQPLSHY…LMYKILVKNK (152 aa)) form the PI-PLC X-box domain. Residues H331 and H378 contribute to the active site. Position 417 is a phosphoserine (S417). Positions 469 to 534 (KSHKSSEGSG…MDEGTAGSEA (66 aa)) are disordered. Over residues 472–483 (KSSEGSGKKKLS) the composition is skewed to basic and acidic residues. The span at 491 to 501 (SDSSSVFEPSS) shows a compositional bias: low complexity. Positions 507–518 (ADTESDDDDDDD) are enriched in acidic residues. A Phosphothreonine modification is found at T509. 2 positions are modified to phosphoserine: S511 and S582. The 117-residue stretch at 540–656 (MSNLVNYIQP…GYRLKPEFMR (117 aa)) folds into the PI-PLC Y-box domain. In terms of domain architecture, C2 spans 656-784 (RRPDKHFDPF…CLRNERNQPL (129 aa)). 4 disordered regions span residues 834–891 (DEEE…VKAP), 933–993 (LVKR…IEQD), 1071–1095 (KMDK…EEEK), and 1172–1216 (KISE…DTPL). S887 is modified (phosphoserine; by PKC). 2 stretches are compositionally biased toward basic and acidic residues: residues 941–951 (TTDLIKEHTTK) and 959–979 (YLRR…KKSE). 2 positions are modified to phosphoserine: S978 and S987. Positions 980 to 991 (PSSPDHVSSTIE) are enriched in polar residues. Over residues 1075 to 1095 (KRQEKITEAKSKDKSQMEEEK) the composition is skewed to basic and acidic residues. The segment covering 1187-1198 (TSDSGKLNQKPP) has biased composition (polar residues). Phosphoserine is present on residues S1199 and S1200. Residues 1207–1216 (NPGKEFDTPL) are compositionally biased toward basic and acidic residues.

In terms of assembly, interacts with DGKQ. Ca(2+) is required as a cofactor. Post-translationally, palmitoylated. Palmitoylation at Cys-17 by ZDHHC21 regulates the signaling activity of PLCB1 and the function of the endothelial barrier. Palmitoylation by ZDHHC21 is stimulated by inflammation.

The protein resides in the nucleus membrane. The protein localises to the cytoplasm. It carries out the reaction a 1,2-diacyl-sn-glycero-3-phospho-(1D-myo-inositol-4,5-bisphosphate) + H2O = 1D-myo-inositol 1,4,5-trisphosphate + a 1,2-diacyl-sn-glycerol + H(+). The enzyme catalyses a 1,2-diacyl-sn-glycero-3-phospho-(1D-myo-inositol) + H2O = 1D-myo-inositol 1-phosphate + a 1,2-diacyl-sn-glycerol + H(+). Its function is as follows. Catalyzes the hydrolysis of 1-phosphatidylinositol 4,5-bisphosphate into diacylglycerol (DAG) and inositol 1,4,5-trisphosphate (IP3) and mediates intracellular signaling downstream of G protein-coupled receptors. Regulates the function of the endothelial barrier. This Bos taurus (Bovine) protein is 1-phosphatidylinositol 4,5-bisphosphate phosphodiesterase beta-1 (PLCB1).